A 298-amino-acid polypeptide reads, in one-letter code: Tyrosine recombinase XerC (298 aa).

One can recognise a Core-binding (CB) domain in the interval 2 to 88 (TDLHTDVERY…ALRSFFDWLV (87 aa)). One can recognise a Tyr recombinase domain in the interval 109–288 (HLPKNIDVDD…DFQHLASVYD (180 aa)). Catalysis depends on residues Arg148, Lys172, His240, Arg243, and His266. Tyr275 acts as the O-(3'-phospho-DNA)-tyrosine intermediate in catalysis.

This sequence belongs to the 'phage' integrase family. XerC subfamily. In terms of assembly, forms a cyclic heterotetrameric complex composed of two molecules of XerC and two molecules of XerD, in which XerC interacts with XerD via its C-terminal region, XerD interacts with XerC via its C-terminal region and so on.

It localises to the cytoplasm. Its activity is regulated as follows. FtsK may regulate the catalytic switch between XerC and XerD in the heterotetrameric complex during the two steps of the recombination process. Functionally, site-specific tyrosine recombinase, which acts by catalyzing the cutting and rejoining of the recombining DNA molecules. Binds cooperatively to specific DNA consensus sequences that are separated from XerD binding sites by a short central region, forming the heterotetrameric XerC-XerD complex that recombines DNA substrates. The complex is essential to convert dimers of the bacterial chromosome into monomers to permit their segregation at cell division. It also contributes to the segregational stability of plasmids. In the complex XerC specifically exchanges the top DNA strands. The protein is Tyrosine recombinase XerC of Escherichia coli (strain 55989 / EAEC).